The following is a 347-amino-acid chain: MFVMSSSSIPNGIFIIDGQERYVNPEGDVESNKSERTSKASMVFQMCEKQCRDENGFKCHCMSESHQRQMQVLGQNPTRVVNGYSQEFEQTFLDLMRRSHRFSRVAATVVYNEYINDRLHVHMNSTKWATLTEFIKYLGKTAEEEKQEREIQKQIERASAGCEGKDVVVDDDDNDDDEKKKDEDFRLKKVGFALGLGVKERGESSKLVFGDEENDKVERGDKRKRSALDELMKEEEKKKERMNRKDYWLFEGIIVKGVVKRVIDKYVGEIEMLESKHVLRVDQVELKTVLPQIGGMVKIVNGAYRGSNTRLLDLDTEKFCAKVQIEKGVYDGRVIKSIEYEDICKLA.

Residues 222–225 carry the Nuclear localization signal (NLS) motif; sequence KRKR.

It belongs to the KIN17 family.

It is found in the cytoplasm. The protein resides in the nucleus. Functionally, may act as repressor of root growth during copper excess and of hypocotyl growth in the dark. The chain is KIN17-like protein KLP from Arabidopsis thaliana (Mouse-ear cress).